Here is an 860-residue protein sequence, read N- to C-terminus: Protein MCM10 homolog (860 aa).

Residues 1-145 form an N-terminal domain region; the sequence is MEVDADLELL…PKKSPENKMV (145 aa). The disordered stretch occupies residues 18–225; the sequence is EAAERNGVVS…GQSTATQPIT (208 aa). Composition is skewed to acidic residues over residues 32-46 and 64-84; these read SELDEFDELFDGDED and VEEDFTTLFGDIDDIKEEEAA. A coiled-coil region spans residues 93-131; sequence SSVCQEKSKDELEDELRKMQAQMKKLQEQLQKTALAKTS. The span at 98-110 shows a compositional bias: basic and acidic residues; it reads EKSKDELEDELRK. Polar residues-rich tracts occupy residues 120–134, 144–154, 164–175, and 214–225; these read EQLQKTALAKTSSPG, MVQSGKTSRTS, SNTVAPQLTSPT, and RPGQSTATQPIT. The tract at residues 230-380 is OB-fold domain; that stretch reads SPVGQQYHVE…LMGDAVDLGT (151 aa). The tract at residues 381 to 406 is zinc finger-like 1; it reads CKARKKNGDPCTQMVNLNDCEYCQYH. 2 disordered regions span residues 553–591 and 657–700; these read QQKQQMLNARKKRAEESQKRFLESTEKSEKSSTLTSSAC and QTLA…NEPA. Positions 565-582 are enriched in basic and acidic residues; it reads RAEESQKRFLESTEKSEK. A C-terminal domain region spans residues 596–860; sequence SPKQGAEFPN…EHGKFLNSLK (265 aa). Zinc finger-like regions lie at residues 768-787 and 801-821; these read CKTCKYTHFKPKETCVSENH and CPCGNRTISLDRLPKKHCSTC.

It belongs to the MCM10 family. Self-associates.

It localises to the nucleus. Functionally, acts as a replication initiation factor that brings together the MCM2-7 helicase and the DNA polymerase alpha/primase complex in order to initiate DNA replication. Additionally, plays a role in preventing DNA damage during replication. This is Protein MCM10 homolog (mcm10) from Xenopus laevis (African clawed frog).